Reading from the N-terminus, the 145-residue chain is uncharacterized protein (145 aa).

The tract at residues 71–95 (GARGRGRTYTKGGSSRSPASWAEQG) is disordered.

This is an uncharacterized protein from Homo sapiens (Human).